Here is an 822-residue protein sequence, read N- to C-terminus: MKNKYDFKLVEEKRNEKWQKKGFFIAPKQTKKPFSIISPPPNVTGQLHLGHSWNAFIQDSLVRYHKLQGFDVLLLPSVDHAGIATQVKVEEDLAKKGIKKSDLKREEFIKKCYHWKEKQYLKIKEQWDKLGICYDFSKERFTLDQDAQIAVSDFFIKLWEKNLIYRGQKAINWDIKLQTAISNIEVINKPVEQKMYYLKYFLENSNEFLTVATTRIETISSDVALAINPKDKRYLHLVGKKVVHPLTKKLIIIIADSNVSSDFGSGIMKVSAHSILDFEIMEKHNLESKDCIDNYGNLNHEVPEFQGQNRFFARDLIAKKLEKEGFLAKIETVISNVGFSQRSDEIVEILKKPQWFVKMDELAKSLISHLNSKDKIKFYPKNFEKNLRKWFEKIHDWTISRQLWWGHRIPVWCKNDEFKVQIDSPGQGWIQDEDVLDTWFSSGISAFAFLGWPQNFDLIKSYFPTSLLVTGWDILFFWVARMYFSSLFIMKQKPFEKVLLHGLIRDEIGRKMSKSLGNGLDPMEIIEKYGSDTLRQALIFNSSPGKDIKFNIEKLNTAWNLNNKIWNIAKYIADLDTFFAKPDLIDLWMENKIYILKRQIVKNIKKYNFSVIGTEINNFIYGDFSSRYIELIKTRKNGFYARKLLRKVLIILHPFLPFLTDFLMEKIFKMEILEQKMPRIRQFKENQKVENILEIIDNLRTYREKFQISKKIILEYCIINDKFSNAEIDIINKLTFGKWLENKELVIKTKNFEIAIKVPEELKKEQKGRELKEIQFLKSEILRAEKILTNKGFLEKAPREKIDLERTKLEKLKEKLAFYEKK.

A 'HIGH' region motif is present at residues 41 to 51; sequence PNVTGQLHLGH. The 'KMSKS' region motif lies at 511–515; that stretch reads KMSKS. Lys-514 is a binding site for ATP. Residues 765 to 822 adopt a coiled-coil conformation; the sequence is EQKGRELKEIQFLKSEILRAEKILTNKGFLEKAPREKIDLERTKLEKLKEKLAFYEKK.

This sequence belongs to the class-I aminoacyl-tRNA synthetase family. ValS type 1 subfamily. Monomer.

It localises to the cytoplasm. It catalyses the reaction tRNA(Val) + L-valine + ATP = L-valyl-tRNA(Val) + AMP + diphosphate. Functionally, catalyzes the attachment of valine to tRNA(Val). As ValRS can inadvertently accommodate and process structurally similar amino acids such as threonine, to avoid such errors, it has a 'posttransfer' editing activity that hydrolyzes mischarged Thr-tRNA(Val) in a tRNA-dependent manner. The sequence is that of Valine--tRNA ligase from Mesomycoplasma hyopneumoniae (strain 7448) (Mycoplasma hyopneumoniae).